We begin with the raw amino-acid sequence, 99 residues long: Bacterial microcompartment shell vertex protein EutN (99 aa).

Residues 5 to 87 (MKLAVVTGQI…VDLCVIGIVD (83 aa)) enclose the BMV domain.

This sequence belongs to the CcmL/EutN family. Homopentamer with a small central pore.

It localises to the bacterial microcompartment. It participates in amine and polyamine degradation; ethanolamine degradation. Probably forms vertices in the bacterial microcompartment (BMC) shell dedicated to ethanolamine degradation. Expression of eutK, eutL, eutM, eutN, eutS (eutSMNLK) in E.coli leads to formation of a single BMC. Coexpression of eutQ with eutSMNLK permits E.coli to make cells with more than one mobile BMC, as is usual in vivo. It may be involved in transporting positively charged molecules into and out of the BMC. In terms of biological role, the ethanolamine (EA) catabolic bacterial microcompartment (BMC) probably concentrates low levels of ethanolamine catabolic enzymes, concentrates volatile reaction intermediates, keeps the level of toxic acetaldehyde low, generates enough acetyl-CoA to support cell growth, and maintains a pool of free coenzyme A (CoA) and NAD. Its function is as follows. Expression of the eut operon allows this bacteria to use ethanolamine (EA) as a carbon, nitrogen and energy source. It relies on cobalamin (vitamin B12) both as a cofactor for the ethanolamine ammonia-lyase (EAL) activity and to induce the operon. EA enhances bacterial survival in macrophages in a concentration-dependent manner, suggesting it is an important nutrient during infection. This chain is Bacterial microcompartment shell vertex protein EutN, found in Salmonella typhimurium (strain LT2 / SGSC1412 / ATCC 700720).